The sequence spans 162 residues: Putative 4-hydroxy-4-methyl-2-oxoglutarate aldolase (162 aa).

Residues 75 to 78 (GDML) and R97 each bind substrate. A divalent metal cation is bound at residue D98.

Belongs to the class II aldolase/RraA-like family. Homotrimer. A divalent metal cation serves as cofactor.

It catalyses the reaction 4-hydroxy-4-methyl-2-oxoglutarate = 2 pyruvate. The enzyme catalyses oxaloacetate + H(+) = pyruvate + CO2. Its function is as follows. Catalyzes the aldol cleavage of 4-hydroxy-4-methyl-2-oxoglutarate (HMG) into 2 molecules of pyruvate. Also contains a secondary oxaloacetate (OAA) decarboxylase activity due to the common pyruvate enolate transition state formed following C-C bond cleavage in the retro-aldol and decarboxylation reactions. The sequence is that of Putative 4-hydroxy-4-methyl-2-oxoglutarate aldolase from Azotobacter vinelandii (strain DJ / ATCC BAA-1303).